An 85-amino-acid chain; its full sequence is Large ribosomal subunit protein bL31 (85 aa).

A disordered region spans residues 64–85; that stretch reads KYGMSESQGAGGKGNAKKKDEK.

This sequence belongs to the bacterial ribosomal protein bL31 family. Type A subfamily. As to quaternary structure, part of the 50S ribosomal subunit.

Functionally, binds the 23S rRNA. In Acaryochloris marina (strain MBIC 11017), this protein is Large ribosomal subunit protein bL31.